The primary structure comprises 237 residues: Uridylate kinase (237 aa).

10–13 is a binding site for ATP; that stretch reads KFSG. Residues 18-23 are involved in allosteric activation by GTP; the sequence is GDSGFG. Position 52 (glycine 52) interacts with UMP. Glycine 53 and arginine 57 together coordinate ATP. UMP is bound by residues aspartate 73 and 134–141; that span reads TGNPFFTT. Residues threonine 161, tyrosine 167, and aspartate 170 each coordinate ATP.

It belongs to the UMP kinase family. Homohexamer.

The protein localises to the cytoplasm. The enzyme catalyses UMP + ATP = UDP + ADP. The protein operates within pyrimidine metabolism; CTP biosynthesis via de novo pathway; UDP from UMP (UMPK route): step 1/1. Its activity is regulated as follows. Allosterically activated by GTP. Inhibited by UTP. Functionally, catalyzes the reversible phosphorylation of UMP to UDP. The sequence is that of Uridylate kinase from Campylobacter hominis (strain ATCC BAA-381 / DSM 21671 / CCUG 45161 / LMG 19568 / NCTC 13146 / CH001A).